The chain runs to 728 residues: 1,4-alpha-glucan branching enzyme GlgB (728 aa).

Residue Asp405 is the Nucleophile of the active site. Residue Glu458 is the Proton donor of the active site.

The protein belongs to the glycosyl hydrolase 13 family. GlgB subfamily. In terms of assembly, monomer.

It carries out the reaction Transfers a segment of a (1-&gt;4)-alpha-D-glucan chain to a primary hydroxy group in a similar glucan chain.. The protein operates within glycan biosynthesis; glycogen biosynthesis. Functionally, catalyzes the formation of the alpha-1,6-glucosidic linkages in glycogen by scission of a 1,4-alpha-linked oligosaccharide from growing alpha-1,4-glucan chains and the subsequent attachment of the oligosaccharide to the alpha-1,6 position. The sequence is that of 1,4-alpha-glucan branching enzyme GlgB from Salmonella paratyphi A (strain ATCC 9150 / SARB42).